A 188-amino-acid chain; its full sequence is Pyridoxal 5'-phosphate synthase subunit PdxT (188 aa).

46-48 (GES) contributes to the L-glutamine binding site. The active-site Nucleophile is cysteine 78. L-glutamine is bound by residues arginine 105 and 134-135 (IR). Active-site charge relay system residues include histidine 170 and glutamate 172.

This sequence belongs to the glutaminase PdxT/SNO family. In terms of assembly, in the presence of PdxS, forms a dodecamer of heterodimers. Only shows activity in the heterodimer.

It carries out the reaction aldehydo-D-ribose 5-phosphate + D-glyceraldehyde 3-phosphate + L-glutamine = pyridoxal 5'-phosphate + L-glutamate + phosphate + 3 H2O + H(+). It catalyses the reaction L-glutamine + H2O = L-glutamate + NH4(+). It functions in the pathway cofactor biosynthesis; pyridoxal 5'-phosphate biosynthesis. In terms of biological role, catalyzes the hydrolysis of glutamine to glutamate and ammonia as part of the biosynthesis of pyridoxal 5'-phosphate. The resulting ammonia molecule is channeled to the active site of PdxS. The sequence is that of Pyridoxal 5'-phosphate synthase subunit PdxT from Thermotoga neapolitana (strain ATCC 49049 / DSM 4359 / NBRC 107923 / NS-E).